We begin with the raw amino-acid sequence, 314 residues long: Lipoyl synthase (314 aa).

[4Fe-4S] cluster contacts are provided by cysteine 40, cysteine 45, cysteine 51, cysteine 67, cysteine 71, cysteine 74, and serine 280. One can recognise a Radical SAM core domain in the interval 53–269; the sequence is SERKTATFMI…KNIALEKGFS (217 aa).

The protein belongs to the radical SAM superfamily. Lipoyl synthase family. Requires [4Fe-4S] cluster as cofactor.

The protein resides in the cytoplasm. The catalysed reaction is [[Fe-S] cluster scaffold protein carrying a second [4Fe-4S](2+) cluster] + N(6)-octanoyl-L-lysyl-[protein] + 2 oxidized [2Fe-2S]-[ferredoxin] + 2 S-adenosyl-L-methionine + 4 H(+) = [[Fe-S] cluster scaffold protein] + N(6)-[(R)-dihydrolipoyl]-L-lysyl-[protein] + 4 Fe(3+) + 2 hydrogen sulfide + 2 5'-deoxyadenosine + 2 L-methionine + 2 reduced [2Fe-2S]-[ferredoxin]. It functions in the pathway protein modification; protein lipoylation via endogenous pathway; protein N(6)-(lipoyl)lysine from octanoyl-[acyl-carrier-protein]. Functionally, catalyzes the radical-mediated insertion of two sulfur atoms into the C-6 and C-8 positions of the octanoyl moiety bound to the lipoyl domains of lipoate-dependent enzymes, thereby converting the octanoylated domains into lipoylated derivatives. The protein is Lipoyl synthase of Oceanobacillus iheyensis (strain DSM 14371 / CIP 107618 / JCM 11309 / KCTC 3954 / HTE831).